The chain runs to 555 residues: MNDLEEIVYKHALLNAAKHKGSANPGAVIGSIMSQEPDLRSRAKEIGPIAGKIVAQVNKLSEDEQSAQMAKYHVEVKENKQKKEEGLQELPGSHDNVVMRFAPNPSGPLHIGHARAAVPNAEYVKRYGGKLILRIEDTDPKRVFEPAYDLIPQDLEWLGIKADEVYYQSDRFEIYYDYARQLIEKGAAYMCTCDGATFKELKDNCKPCPCRDNSVEKNLELWDKFDQMHAGEAVLRVKTDINHKNPAIRDWVAMRIVEETHPRLGNKYRVYPMMNFSVAVDDHLMGMSHVLRGKDHLANSEKQKYLYDHMGWDVPEFIHYGRLKMEDIALSTSKALEGISSGKYSGWDDPRLGTLKAIARRGIQPQTIYNLITEIGVKMSDSAISWKKIYGLNRNFLEPIANRYFFVENPVEITVDGYEDGAVDIERPLHADHEDRGNRILPFAGKAYLASEDVKDGISRLMDAVNVDIDGDKITYNSTSFEQARDLKAKIIQWVPVEDNVNVSIVMDDASTKTGLGEGALKDLKVGDVVQFERVGFARLDEIKDNELVFYYAHK.

The 'HIGH' region signature appears at 103–113 (PNPSGPLHIGH).

Belongs to the class-I aminoacyl-tRNA synthetase family. Glutamate--tRNA ligase type 2 subfamily.

It localises to the cytoplasm. The enzyme catalyses tRNA(Glu) + L-glutamate + ATP = L-glutamyl-tRNA(Glu) + AMP + diphosphate. In terms of biological role, catalyzes the attachment of glutamate to tRNA(Glu) in a two-step reaction: glutamate is first activated by ATP to form Glu-AMP and then transferred to the acceptor end of tRNA(Glu). In Methanobrevibacter smithii (strain ATCC 35061 / DSM 861 / OCM 144 / PS), this protein is Glutamate--tRNA ligase.